Consider the following 301-residue polypeptide: Possible hemolysin C (301 aa).

CBS domains follow at residues methionine 80–leucine 142 and leucine 145–glutamate 202.

The protein belongs to the UPF0053 family. Hemolysin C subfamily.

In Rickettsia akari (strain Hartford), this protein is Possible hemolysin C (tlyC).